A 526-amino-acid chain; its full sequence is Cell adhesion molecule CEACAM1 (526 aa).

The signal sequence occupies residues 1-34 (MGHLSAPLHRVRVPWQGLLLTASLLTFWNPPTTA). Q35 bears the Pyrrolidone carboxylic acid mark. Residues 35–142 (QLTTESMPFN…EATGQFHVYP (108 aa)) enclose the Ig-like V-type domain. At 35-428 (QLTTESMPFN…LPQENGLSPG (394 aa)) the chain is on the extracellular side. A required for homophilic binding region spans residues 39-142 (ESMPFNVAEG…EATGQFHVYP (104 aa)). N104, N111, N115, N152, N182, N197, N208, N224, N232, N254, N274, N288, N292, N302, N309, N345, N351, N363, N378, and N405 each carry an N-linked (GlcNAc...) asparagine glycan. 3 Ig-like C2-type domains span residues 145–232 (PKPS…VTLN), 237–317 (PDTP…KTII), and 323–413 (PVVA…IMLN). A disulfide bridge connects residues C167 and C215. The cysteines at positions 259 and 299 are disulfide-linked. Cysteines 348 and 396 form a disulfide. Residues 429–452 (AIAGIVIGVVALVALIAVALACFL) traverse the membrane as a helical segment. Residues 450-462 (CFLHFGKTGRASD) are interaction with calmodulin. The interaction with FLNA stretch occupies residues 452 to 526 (LHFGKTGRAS…EIIYSEVKKQ (75 aa)). At 453–526 (HFGKTGRASD…EIIYSEVKKQ (74 aa)) the chain is on the cytoplasmic side. Basic and acidic residues predominate over residues 461–482 (SDQRDLTEHKPSVSNHTQDHSN). Positions 461–513 (SDQRDLTEHKPSVSNHTQDHSNDPPNKMNEVTYSTLNFEAQQPTQPTSASPSL) are disordered. Positions 489 to 513 (NEVTYSTLNFEAQQPTQPTSASPSL) are enriched in polar residues. The required for interaction with PTPN11 and PTPN6 and for control of phosphorylation level stretch occupies residues 489-526 (NEVTYSTLNFEAQQPTQPTSASPSLTATEIIYSEVKKQ). Position 493 is a phosphotyrosine; by SRC, LCK, INSR and EGFR (Y493). S508 is modified (phosphoserine). Y520 bears the Phosphotyrosine; by INSR, SRC and LCK mark. Positions 520 to 523 (YSEV) are essential for interaction with PTPN11 and PTPN6.

It belongs to the immunoglobulin superfamily. CEA family. Monomer. Oligomer. Heterodimer. Homodimer. Cis-dimer/oligomer (via Ig-like C2-type and/or via cytoplasmic domains); induced by trans-homophilic cell adhesion through an allosteric mechanism transmitted by the Ig-like V-type domain, and is regulated by intracellular calcium and calmodulin. Interacts (via cytoplasmic domain) with calmodulin in a calcium dependent manner; reduces homophilic cell adhesion through dissociation of dimer. Isoform 1 interacts (via cytoplasmic domain) with PTPN11 (preferentially) and PTPN6; cis-homodimer form is preferred; this interaction is decreased by formation of Isoform 1 /Isoform 8 cis-heterodimers and is dependent on the monomer/dimer equilibrium; this interaction is phosphorylation-dependent. Isoform 1 interacts with LYN. Isoform 1 interacts (via cytoplasmic domain) with SRC (via SH2 domain); this interaction is regulated by trans-homophilic cell adhesion. Isoform 1 interacts (via cytoplasmic domain) with LCK; mediates phosphorylation at Tyr-493 and Tyr-520 resulting in PTPN6 association. Isoform 1 interacts with PTPN6; this interaction is phosphorylation-dependent and causes a profound decrease in TCR stimulation-induced CD247 and ZAP70 phosphorylation. Isoform 1 interacts with TCR/CD3 complex through TCR beta chain and CD3E; colocalizes at the cell surface and upon stimulation of the TCR/CD3 complex recruits PTPN6 in the TCR/CD3 complex, resulting in dephosphorylation of CD247 and ZAP70. Isoform 1 interacts (via cytoplasmic domain) with SHC1 (via SH2 domain); SHC1 mediates interaction with INSR or EGFR in a Ser-508 phosphorylation-dependent manner. Isoform 1 interacts with EGFR; the interaction is indirect. Isoform 1 interacts with CSF3R; down-regulates the CSF3R-STAT3 pathway through recruitment of PTPN6 that dephosphorylates CSF3R. Isoform 1 (phosphorylated form) interacts with TLR4 and SYK; recruits PTPN6 that dephosphorylates SYK, reducing the production of reactive oxygen species (ROS) and lysosome disruption, leading to a reduction of the inflammasome activity. Isoform 1 interacts with FLNA; inhibits cell migration and cell scattering by interfering with the interaction of FLNA with RALA. Isoform 1 interacts (via cytoplasmic domain) with PXN; the interaction is phosphotyrosyl-dependent. Isoform 1 interacts with KLRK1; recruits PTPN6 that dephosphorylates VAV1. Isoform 1 interacts with CEACAM8. Isoform 1 interacts with FASN; this interaction is insulin and phosphorylation-dependent; reduces fatty-acid synthase activity. Interacts (via Ig-like V-type) with HAVCR2 (via Ig-like V-type); facilitates the maturation and cell surface expression of HAVCR2 thereby regulating T cell tolerance induction. Isoform 8 interacts (via the cytoplasmic domain) with ANXA2; this interaction is regulated by phosphorylation and appears in the AIIt complex. Interacts (via Lewis X moieties) with CD209 (via C-type lectin domain); this interaction is regulated by the glycosylation pattern of CEACAM1 on cell types and regulates contact between dendritic cells and neutrophils. Phosphorylated on serine and tyrosine. Isoform 1 is phosphorylated on tyrosine by Src family kinases like SRC and LCK and by receptor like CSF3R, EGFR and INSR upon stimulation. Phosphorylated at Ser-508; mediates activity. Phosphorylated at Tyr-493; regulates activity. Phosphorylated at Tyr-493 by EGFR and INSR upon stimulation; this phosphorylation is Ser-508-phosphorylation-dependent; mediates cellular internalization; increases interaction with downstream proteins like SHC1 and FASN. Phosphorylated at Tyr-493 and Tyr-520 by LCK; mediates PTPN6 association and is regulated by homophilic ligation of CEACAM1 in the absence of T cell activation. Phosphorylated at Tyr-520; mediates interaction with PTPN11. In terms of processing, phosphorylated on serine and threonine. Expressed in columnar epithelial cells of the colon (at protein level). The predominant forms expressed by T cells are those containing a long cytoplasmic domain. Expressed in granulocytes and lymphocytes. Leukocytes only express isoforms 6 and isoform 1.

Its subcellular location is the cell membrane. The protein resides in the lateral cell membrane. The protein localises to the apical cell membrane. It is found in the basal cell membrane. It localises to the cell junction. Its subcellular location is the adherens junction. The protein resides in the secreted. The protein localises to the cytoplasmic vesicle. It is found in the secretory vesicle membrane. It localises to the cell projection. Its subcellular location is the microvillus membrane. Functionally, cell adhesion protein that mediates homophilic cell adhesion in a calcium-independent manner. Plays a role as coinhibitory receptor in immune response, insulin action and also functions as an activator during angiogenesis. Its coinhibitory receptor function is phosphorylation- and PTPN6 -dependent, which in turn, suppress signal transduction of associated receptors by dephosphorylation of their downstream effectors. Plays a role in immune response, of T cells, natural killer (NK) and neutrophils. Upon TCR/CD3 complex stimulation, inhibits TCR-mediated cytotoxicity by blocking granule exocytosis by mediating homophilic binding to adjacent cells, allowing interaction with and phosphorylation by LCK and interaction with the TCR/CD3 complex which recruits PTPN6 resulting in dephosphorylation of CD247 and ZAP70. Also inhibits T cell proliferation and cytokine production through inhibition of JNK cascade and plays a crucial role in regulating autoimmunity and anti-tumor immunity by inhibiting T cell through its interaction with HAVCR2. Upon natural killer (NK) cells activation, inhibit KLRK1-mediated cytolysis of CEACAM1-bearing tumor cells by trans-homophilic interactions with CEACAM1 on the target cell and lead to cis-interaction between CEACAM1 and KLRK1, allowing PTPN6 recruitment and then VAV1 dephosphorylation. Upon neutrophils activation negatively regulates IL1B production by recruiting PTPN6 to a SYK-TLR4-CEACAM1 complex, that dephosphorylates SYK, reducing the production of reactive oxygen species (ROS) and lysosome disruption, which in turn, reduces the activity of the inflammasome. Down-regulates neutrophil production by acting as a coinhibitory receptor for CSF3R by down-regulating the CSF3R-STAT3 pathway through recruitment of PTPN6 that dephosphorylates CSF3R. Also regulates insulin action by promoting INS clearance and regulating lipogenesis in liver through regulating insulin signaling. Upon INS stimulation, undergoes phosphorylation by INSR leading to INS clearance by increasing receptor-mediated insulin endocytosis. This inernalization promotes interaction with FASN leading to receptor-mediated insulin degradation and to reduction of FASN activity leading to negative regulation of fatty acid synthesis. INSR-mediated phosphorylation also provokes a down-regulation of cell proliferation through SHC1 interaction resulting in decrease coupling of SHC1 to the MAPK3/ERK1-MAPK1/ERK2 and phosphatidylinositol 3-kinase pathways. Functions as activator in angiogenesis by promoting blood vessel remodeling through endothelial cell differentiation and migration and in arteriogenesis by increasing the number of collateral arteries and collateral vessel calibers after ischemia. Also regulates vascular permeability through the VEGFR2 signaling pathway resulting in control of nitric oxide production. Down-regulates cell growth in response to EGF through its interaction with SHC1 that mediates interaction with EGFR resulting in decrease coupling of SHC1 to the MAPK3/ERK1-MAPK1/ERK2 pathway. Negatively regulates platelet aggregation by decreasing platelet adhesion on type I collagen through the GPVI-FcRgamma complex. Inhibits cell migration and cell scattering through interaction with FLNA; interferes with the interaction of FLNA with RALA. Mediates bile acid transport activity in a phosphorylation dependent manner. Negatively regulates osteoclastogenesis. In terms of biological role, cell adhesion protein that mediates homophilic cell adhesion in a calcium-independent manner. Promotes populations of T cells regulating IgA production and secretion associated with control of the commensal microbiota and resistance to enteropathogens. This Homo sapiens (Human) protein is Cell adhesion molecule CEACAM1.